Here is a 231-residue protein sequence, read N- to C-terminus: Ubiquinone biosynthesis protein coq-4, mitochondrial (231 aa).

4 residues coordinate Zn(2+): H133, D134, H137, and E149.

Belongs to the COQ4 family. In terms of assembly, component of a multi-subunit COQ enzyme complex. It depends on Zn(2+) as a cofactor.

It localises to the mitochondrion inner membrane. It carries out the reaction a 4-hydroxy-3-methoxy-5-(all-trans-polyprenyl)benzoate + H(+) = a 2-methoxy-6-(all-trans-polyprenyl)phenol + CO2. Its pathway is cofactor biosynthesis; ubiquinone biosynthesis. Lyase that catalyzes the C1-decarboxylation of 4-hydroxy-3-methoxy-5-(all-trans-polyprenyl)benzoic acid into 2-methoxy-6-(all-trans-polyprenyl)phenol during ubiquinone biosynthesis. The protein is Ubiquinone biosynthesis protein coq-4, mitochondrial of Caenorhabditis elegans.